The chain runs to 212 residues: HTH-type transcriptional regulator RutR (212 aa).

Residues 17–77 (SAKKKAILSA…AVLRQILDIW (61 aa)) enclose the HTH tetR-type domain. Residues 39-58 (TRLEQIAELAGVSKTNLLYY) constitute a DNA-binding region (H-T-H motif).

In terms of assembly, homodimer.

Its function is as follows. Master transcription regulator which represses the degradation of pyrimidines (rutABCDEFG) and purines (gcl operon) for maintenance of metabolic balance between pyrimidines and purines. It also regulates the synthesis of pyrimidine nucleotides and arginine from glutamine (carAB) and the supply of glutamate (gadABWX). In Escherichia coli O6:H1 (strain CFT073 / ATCC 700928 / UPEC), this protein is HTH-type transcriptional regulator RutR (rutR).